The sequence spans 415 residues: Gamma-glutamyl phosphate reductase (415 aa).

The protein belongs to the gamma-glutamyl phosphate reductase family.

The protein localises to the cytoplasm. It catalyses the reaction L-glutamate 5-semialdehyde + phosphate + NADP(+) = L-glutamyl 5-phosphate + NADPH + H(+). It functions in the pathway amino-acid biosynthesis; L-proline biosynthesis; L-glutamate 5-semialdehyde from L-glutamate: step 2/2. Catalyzes the NADPH-dependent reduction of L-glutamate 5-phosphate into L-glutamate 5-semialdehyde and phosphate. The product spontaneously undergoes cyclization to form 1-pyrroline-5-carboxylate. This chain is Gamma-glutamyl phosphate reductase, found in Salmonella dublin (strain CT_02021853).